Here is a 147-residue protein sequence, read N- to C-terminus: 3-dehydroquinate dehydratase (147 aa).

Catalysis depends on tyrosine 25, which acts as the Proton acceptor. Asparagine 76, histidine 82, and aspartate 89 together coordinate substrate. The Proton donor role is filled by histidine 102. Residues 103–104 (LS) and arginine 113 each bind substrate.

This sequence belongs to the type-II 3-dehydroquinase family. In terms of assembly, homododecamer.

The catalysed reaction is 3-dehydroquinate = 3-dehydroshikimate + H2O. Its pathway is metabolic intermediate biosynthesis; chorismate biosynthesis; chorismate from D-erythrose 4-phosphate and phosphoenolpyruvate: step 3/7. In terms of biological role, catalyzes a trans-dehydration via an enolate intermediate. In Nostoc sp. (strain PCC 7120 / SAG 25.82 / UTEX 2576), this protein is 3-dehydroquinate dehydratase.